A 196-amino-acid chain; its full sequence is Probable molybdenum cofactor guanylyltransferase (196 aa).

GTP-binding positions include 7-9, Lys19, Asp68, and Asp93; that span reads LAG. Asp93 serves as a coordination point for Mg(2+).

Belongs to the MobA family. Mg(2+) serves as cofactor.

Its subcellular location is the cytoplasm. The catalysed reaction is Mo-molybdopterin + GTP + H(+) = Mo-molybdopterin guanine dinucleotide + diphosphate. Transfers a GMP moiety from GTP to Mo-molybdopterin (Mo-MPT) cofactor (Moco or molybdenum cofactor) to form Mo-molybdopterin guanine dinucleotide (Mo-MGD) cofactor. In Pyrococcus furiosus (strain ATCC 43587 / DSM 3638 / JCM 8422 / Vc1), this protein is Probable molybdenum cofactor guanylyltransferase.